We begin with the raw amino-acid sequence, 820 residues long: MKTNMQVKGRGGNMKANTNTQQVIFELKKKVVIALNKLADRDTYQRGVDELEKTVEHLAPDKVSCFLSCILDTDSEQKSAVRKECIRLMGTLARFHEGLVGPYLGKMVSSIVKRLKDPDSVVRDACIETMGVLASKMSCYEDQNFGVFVSLVKPLFEAIGDQNKYVQSGAALCLARVIDSSPEAPVAIIQRMLMRTVKLLNNSHFIAKPAVIELNRSIILAGGATSKSVLSSAMSSFQDALKNKDWTTRKAASVALMEIAATGEKFLGPLKASCICSLESCRFDKVKPVRDSVILALKYWKGVPGSDSPEPSETESSVKESYNGARESSELFSTSDFKVKDGMSIKYVTDVTRKKVPVSARQPPTRYNDDPRKSNQDDWHIEIAVPESSFVSKVDLYNEESEGSCITKTFAETTNTPEVTYEYIPMKDKADSYVTGGVNENDDIKSITVSSSSFRASGMVNPAITSKNYAAEETDLEEQPFSTQVKDRTSLDSFVTVSSSQINHDCCAKIANEMASVRKQLSDIENKQSRLIDQLQVFSTGIMNNFSVLQSKVSSLEYAVEGIAQNAALHSDISNSNFVKHNQGSTISPRLSSCTSRTSTDIRNRQSTLSTSKYSRENKTHVRSRLNESQGMEKTRSNPLGKTGQLHTREDIWNNIGQGRQTLIQTRTSSDSIQSIRQQYAEVMSGTRKPVTGVSCEDVVESEYLQVLSSGDELALVELLDRTGPVLESMSSQTINEILSILLSYLLERRFMNSILPWLHQVADLSTTNGANYLIPSARKRAQVLSAIQEASGMDFSNLAERRAVTQIAMKLRKLWGKCS.

5 HEAT repeats span residues 61 to 98, 102 to 139, 146 to 183, 187 to 224, and 228 to 265; these read DKVS…FHEG, PYLG…KMSC, GVFV…SSPE, AIIQ…AGGA, and SVLS…TGEK. The span at 304–321 shows a compositional bias: low complexity; the sequence is PGSDSPEPSETESSVKES. Disordered stretches follow at residues 304-325, 357-377, and 584-644; these read PGSD…YNGA, PVSA…SNQD, and GSTI…GKTG. Basic and acidic residues predominate over residues 367–377; the sequence is YNDDPRKSNQD. The segment covering 584 to 613 has biased composition (polar residues); it reads GSTISPRLSSCTSRTSTDIRNRQSTLSTSK.

This is TORTIFOLIA1-like protein 2 from Arabidopsis thaliana (Mouse-ear cress).